A 369-amino-acid polypeptide reads, in one-letter code: tRNA-specific 2-thiouridylase MnmA (369 aa).

ATP-binding positions include 10–17 and Leu36; that span reads GLSGGVDS. Cys97 functions as the Nucleophile in the catalytic mechanism. Cys97 and Cys196 are oxidised to a cystine. ATP is bound at residue Gly122. Residues 146–148 are interaction with tRNA; the sequence is KDQ. The active-site Cysteine persulfide intermediate is the Cys196. An interaction with tRNA region spans residues 301-302; sequence RY.

The protein belongs to the MnmA/TRMU family.

Its subcellular location is the cytoplasm. It catalyses the reaction S-sulfanyl-L-cysteinyl-[protein] + uridine(34) in tRNA + AH2 + ATP = 2-thiouridine(34) in tRNA + L-cysteinyl-[protein] + A + AMP + diphosphate + H(+). Functionally, catalyzes the 2-thiolation of uridine at the wobble position (U34) of tRNA, leading to the formation of s(2)U34. The polypeptide is tRNA-specific 2-thiouridylase MnmA (Thermosynechococcus vestitus (strain NIES-2133 / IAM M-273 / BP-1)).